Consider the following 216-residue polypeptide: Adenylate kinase (216 aa).

10–15 lines the ATP pocket; it reads GSGKGT. The tract at residues 30 to 59 is NMP; it reads STGEILRKEIKKNKKTKKYIKKTINKGKLI. AMP contacts are provided by residues T31, R36, 57–59, 85–88, and Q92; these read KLI and GFPR. Residues 121–158 are LID; sequence GRLIHASSGRTYHKIFNPPKIKNKDDITQEKLCSRNDD. ATP is bound by residues R122 and 131 to 132; that span reads TY. Residues R155 and R166 each coordinate AMP. An ATP-binding site is contributed by Q196.

Belongs to the adenylate kinase family. As to quaternary structure, monomer.

The protein resides in the cytoplasm. It carries out the reaction AMP + ATP = 2 ADP. Its pathway is purine metabolism; AMP biosynthesis via salvage pathway; AMP from ADP: step 1/1. Functionally, catalyzes the reversible transfer of the terminal phosphate group between ATP and AMP. Plays an important role in cellular energy homeostasis and in adenine nucleotide metabolism. This chain is Adenylate kinase, found in Buchnera aphidicola subsp. Cinara cedri (strain Cc).